Here is a 515-residue protein sequence, read N- to C-terminus: Maturase K (515 aa).

This sequence belongs to the intron maturase 2 family. MatK subfamily.

It is found in the plastid. The protein resides in the chloroplast. Its function is as follows. Usually encoded in the trnK tRNA gene intron. Probably assists in splicing its own and other chloroplast group II introns. In Pinus yunnanensis (Yunnan pine), this protein is Maturase K.